The primary structure comprises 139 residues: Large ribosomal subunit protein uL16c (139 aa).

Basic residues predominate over residues 1 to 17 (MLSPKKTKFRKQHRGRM). Positions 1–23 (MLSPKKTKFRKQHRGRMKGSASK) are disordered.

The protein belongs to the universal ribosomal protein uL16 family. Part of the 50S ribosomal subunit.

It localises to the plastid. The protein localises to the chloroplast. This chain is Large ribosomal subunit protein uL16c, found in Porphyra purpurea (Red seaweed).